We begin with the raw amino-acid sequence, 344 residues long: MKERLQQLQQEALEKIEQANDLKALNDVRVAYLGKKGPITEVLRGMGALSPEERPIMGALVNDVREAIQQALEAKQATLEQAEVEKKLAAEAIDVTLPGRPIRRGNHHPLTRVIEEIEDLFIGMGYTIAEGPEVEQDYYNFEALNLPKGHPARDMQDSFYITEEILLRTHTSPVQARTMEKHQGRGPVKIICPGKVYRRDNDDATHSHQFTQIEGLVVDENIRMSDLKGTLREFARKMFGEDRDIRFRPSFFPFTEPSVEVDVSCFNCGGHGCNVCKGTGWIEILGAGMVHPNVLEMAGFDSKKYTGFAFGMGPERIAMLKYGIDDIRHFYQNDLRFLQQFNRV.

Mg(2+) is bound at residue Glu-256.

This sequence belongs to the class-II aminoacyl-tRNA synthetase family. Phe-tRNA synthetase alpha subunit type 1 subfamily. In terms of assembly, tetramer of two alpha and two beta subunits. Requires Mg(2+) as cofactor.

Its subcellular location is the cytoplasm. It carries out the reaction tRNA(Phe) + L-phenylalanine + ATP = L-phenylalanyl-tRNA(Phe) + AMP + diphosphate + H(+). The polypeptide is Phenylalanine--tRNA ligase alpha subunit (Anoxybacillus flavithermus (strain DSM 21510 / WK1)).